A 160-amino-acid chain; its full sequence is Large ribosomal subunit protein uL16 (160 aa).

Residues 138-160 (INLSSDSSGEGKTGKDSKEEVKK) are disordered. Residues 149 to 160 (KTGKDSKEEVKK) are compositionally biased toward basic and acidic residues.

This sequence belongs to the universal ribosomal protein uL16 family. As to quaternary structure, part of the 50S ribosomal subunit.

In terms of biological role, binds 23S rRNA and is also seen to make contacts with the A and possibly P site tRNAs. This Prochlorococcus marinus subsp. pastoris (strain CCMP1986 / NIES-2087 / MED4) protein is Large ribosomal subunit protein uL16.